We begin with the raw amino-acid sequence, 843 residues long: Protein P (843 aa).

Residues 1–177 (MPLSYQHFRK…FCGSPYSWEQ (177 aa)) are terminal protein domain (TP). The spacer stretch occupies residues 178-346 (DLQHGRLVFQ…YCLCHIVNLI (169 aa)). 2 disordered regions span residues 220-258 (KSRL…VGVE) and 292-319 (SKGH…SQGS). Low complexity predominate over residues 308–319 (PPNSSRSQSQGS). Residues 347-690 (DDWGPCAEHG…YLNLYPVARQ (344 aa)) are polymerase/reverse transcriptase domain (RT). The 244-residue stretch at 357–600 (EHRIRTPRTP…YSLNFMGYVI (244 aa)) folds into the Reverse transcriptase domain. 3 residues coordinate Mg(2+): Asp429, Asp551, and Asp552.

The protein belongs to the hepadnaviridae P protein family.

It catalyses the reaction DNA(n) + a 2'-deoxyribonucleoside 5'-triphosphate = DNA(n+1) + diphosphate. The catalysed reaction is Endonucleolytic cleavage to 5'-phosphomonoester.. With respect to regulation, activated by host HSP70 and HSP40 in vitro to be able to bind the epsilon loop of the pgRNA. Because deletion of the RNase H region renders the protein partly chaperone-independent, the chaperones may be needed indirectly to relieve occlusion of the RNA-binding site by this domain. Inhibited by several reverse-transcriptase inhibitors: Lamivudine, Adefovir and Entecavir. In terms of biological role, multifunctional enzyme that converts the viral RNA genome into dsDNA in viral cytoplasmic capsids. This enzyme displays a DNA polymerase activity that can copy either DNA or RNA templates, and a ribonuclease H (RNase H) activity that cleaves the RNA strand of RNA-DNA heteroduplexes in a partially processive 3'- to 5'-endonucleasic mode. Neo-synthesized pregenomic RNA (pgRNA) are encapsidated together with the P protein, and reverse-transcribed inside the nucleocapsid. Initiation of reverse-transcription occurs first by binding the epsilon loop on the pgRNA genome, and is initiated by protein priming, thereby the 5'-end of (-)DNA is covalently linked to P protein. Partial (+)DNA is synthesized from the (-)DNA template and generates the relaxed circular DNA (RC-DNA) genome. After budding and infection, the RC-DNA migrates in the nucleus, and is converted into a plasmid-like covalently closed circular DNA (cccDNA). The activity of P protein does not seem to be necessary for cccDNA generation, and is presumably released from (+)DNA by host nuclear DNA repair machinery. The sequence is that of Protein P from Hepatitis B virus genotype B1 (isolate Japan/Yamagata-2/1998) (HBV-B).